Here is a 238-residue protein sequence, read N- to C-terminus: Ribosomal RNA small subunit methyltransferase G (238 aa).

S-adenosyl-L-methionine-binding positions include Gly-77, Phe-82, 128-129 (AE), and Arg-147. Residues 216-238 (RKERSTPKKYPRKPGTPNKQPLS) are disordered.

Belongs to the methyltransferase superfamily. RNA methyltransferase RsmG family.

The protein resides in the cytoplasm. Specifically methylates the N7 position of guanine in position 535 of 16S rRNA. The polypeptide is Ribosomal RNA small subunit methyltransferase G (Halalkalibacterium halodurans (strain ATCC BAA-125 / DSM 18197 / FERM 7344 / JCM 9153 / C-125) (Bacillus halodurans)).